Here is a 250-residue protein sequence, read N- to C-terminus: tRNA (guanine-N(1)-)-methyltransferase (250 aa).

S-adenosyl-L-methionine-binding positions include Gly-115 and 135 to 140 (LGDFVL).

This sequence belongs to the RNA methyltransferase TrmD family. In terms of assembly, homodimer.

The protein resides in the cytoplasm. It carries out the reaction guanosine(37) in tRNA + S-adenosyl-L-methionine = N(1)-methylguanosine(37) in tRNA + S-adenosyl-L-homocysteine + H(+). In terms of biological role, specifically methylates guanosine-37 in various tRNAs. This Legionella pneumophila subsp. pneumophila (strain Philadelphia 1 / ATCC 33152 / DSM 7513) protein is tRNA (guanine-N(1)-)-methyltransferase.